Consider the following 1699-residue polypeptide: Cilia- and flagella-associated protein 61 (1699 aa).

The span at 1–22 (MYSNNQLDNPNHSRSQYRNGDQ) shows a compositional bias: polar residues. 3 disordered regions span residues 1–23 (MYSNNQLDNPNHSRSQYRNGDQS), 489–515 (QLKRPQKKVTKRPKRQKEEDKKEDEFK), and 1340–1365 (ERDANSENADKGFDDTQSRDGDEENQ). The span at 489-503 (QLKRPQKKVTKRPKR) shows a compositional bias: basic residues. Composition is skewed to basic and acidic residues over residues 504-515 (QKEEDKKEDEFK) and 1340-1359 (ERDANSENADKGFDDTQSRD).

The protein localises to the cell projection. It is found in the cilium. As component of a spoke-associated complex, regulates ciliary mobility by mediating a stable and functional assembly of the radial spoke 3 (RS3). The protein is Cilia- and flagella-associated protein 61 of Tetrahymena thermophila (strain SB210).